A 250-amino-acid chain; its full sequence is Proteasome subunit alpha type-4 (250 aa).

It belongs to the peptidase T1A family. As to quaternary structure, the 26S proteasome consists of a 20S proteasome core and two 19S regulatory subunits. The 20S proteasome core is composed of 28 subunits that are arranged in four stacked rings, resulting in a barrel-shaped structure. The two end rings are each formed by seven alpha subunits, and the two central rings are each formed by seven beta subunits. The catalytic chamber with the active sites is on the inside of the barrel.

The protein resides in the cytoplasm. It localises to the nucleus. Its function is as follows. The proteasome is a multicatalytic proteinase complex which is characterized by its ability to cleave peptides with Arg, Phe, Tyr, Leu, and Glu adjacent to the leaving group at neutral or slightly basic pH. The proteasome has an ATP-dependent proteolytic activity. In Dictyostelium discoideum (Social amoeba), this protein is Proteasome subunit alpha type-4 (psmA4).